We begin with the raw amino-acid sequence, 35 residues long: Photosystem II reaction center protein T (35 aa).

The chain crosses the membrane as a helical span at residues 3 to 23; that stretch reads ALVYTFLLVSTLGIIFFAIFF.

Belongs to the PsbT family. PSII is composed of 1 copy each of membrane proteins PsbA, PsbB, PsbC, PsbD, PsbE, PsbF, PsbH, PsbI, PsbJ, PsbK, PsbL, PsbM, PsbT, PsbY, PsbZ, Psb30/Ycf12, at least 3 peripheral proteins of the oxygen-evolving complex and a large number of cofactors. It forms dimeric complexes.

The protein resides in the plastid. Its subcellular location is the chloroplast thylakoid membrane. In terms of biological role, found at the monomer-monomer interface of the photosystem II (PS II) dimer, plays a role in assembly and dimerization of PSII. PSII is a light-driven water plastoquinone oxidoreductase, using light energy to abstract electrons from H(2)O, generating a proton gradient subsequently used for ATP formation. In Pinus thunbergii (Japanese black pine), this protein is Photosystem II reaction center protein T.